Here is a 230-residue protein sequence, read N- to C-terminus: Large ribosomal subunit protein uL1 (230 aa).

This sequence belongs to the universal ribosomal protein uL1 family. As to quaternary structure, part of the 50S ribosomal subunit.

Functionally, binds directly to 23S rRNA. The L1 stalk is quite mobile in the ribosome, and is involved in E site tRNA release. Its function is as follows. Protein L1 is also a translational repressor protein, it controls the translation of the L11 operon by binding to its mRNA. In Chromohalobacter salexigens (strain ATCC BAA-138 / DSM 3043 / CIP 106854 / NCIMB 13768 / 1H11), this protein is Large ribosomal subunit protein uL1.